The sequence spans 638 residues: Probable potassium transport system protein Kup (638 aa).

Helical transmembrane passes span 25 to 45 (LAIA…LYSL), 65 to 85 (VISL…LLFV), 114 to 134 (AGAL…DAVI), 152 to 172 (PHLS…LFWI), 184 to 204 (FGPI…YHIV), 226 to 246 (LLQA…AEAL), 262 to 282 (AYGL…ALLI), 291 to 311 (PFFL…STVA), 352 to 372 (IYVP…VVGF), 382 to 402 (YGIA…VVMV), 410 to 430 (LLVG…FGAN), and 434 to 454 (VAQG…LLMT).

Belongs to the HAK/KUP transporter (TC 2.A.72) family.

The protein localises to the cell inner membrane. The catalysed reaction is K(+)(in) + H(+)(in) = K(+)(out) + H(+)(out). In terms of biological role, transport of potassium into the cell. Likely operates as a K(+):H(+) symporter. The polypeptide is Probable potassium transport system protein Kup (Burkholderia cenocepacia (strain HI2424)).